Consider the following 471-residue polypeptide: Dynein regulatory complex subunit 4 (471 aa).

The segment at 1–24 (MAPKKKGTKKESKKDAVATGDIEG) is disordered. Coiled coils occupy residues 23–239 (EGAS…YNDI) and 282–425 (LSRA…DVAK).

It belongs to the DRC4 family. Component of the nexin-dynein regulatory complex (N-DRC). Interacts with DRC1, DRC2 and DRC5.

The protein localises to the cytoplasm. It localises to the cytoskeleton. The protein resides in the flagellum axoneme. Its subcellular location is the flagellum basal body. In terms of biological role, component of the nexin-dynein regulatory complex (N-DRC), a key regulator of ciliary/flagellar motility which maintains the alignment and integrity of the distal axoneme and regulates microtubule sliding in motile axonemes. Plays an important role in the assembly of the N-DRC linker. The polypeptide is Dynein regulatory complex subunit 4 (Chlamydomonas reinhardtii (Chlamydomonas smithii)).